Consider the following 393-residue polypeptide: MSLPLTRKDLMIVNMGPQHPSMHGVLRLIVTLDGEDVIDCEPILGYLHRGMEKIAENRTIIQYLPYVTRWDYLATMFTEAITVNAPEFLENIQIPQRASYIRVIMLELSRIASHLLWLGPFMADLGAQTPFFYIFRERELIYDLFEAATGMRMMHNYFRIGGVAADLPYGWIDKCLDFCDYFLRGIIEYQQLIKQNPIFLERVEGVGFISGEEAVNWGLSGPMLRASGIQWDLRKVDLYESYNQFDWKVQWQKEGDSLARYLVRISEMRESIKIIQQAIEKIPGGPYENLEVRRFKKAKTSEWNDFEYKFLGKKPSPNFELSKQELYVRVEAPKGELGIYLVGDDSLFPWRWKIRPPGFINLQILPQLVKKMKLADIMTILGSIDIIMGEVDR.

It belongs to the complex I 49 kDa subunit family. As to quaternary structure, NDH is composed of at least 16 different subunits, 5 of which are encoded in the nucleus.

Its subcellular location is the plastid. The protein resides in the chloroplast thylakoid membrane. It catalyses the reaction a plastoquinone + NADH + (n+1) H(+)(in) = a plastoquinol + NAD(+) + n H(+)(out). The enzyme catalyses a plastoquinone + NADPH + (n+1) H(+)(in) = a plastoquinol + NADP(+) + n H(+)(out). In terms of biological role, NDH shuttles electrons from NAD(P)H:plastoquinone, via FMN and iron-sulfur (Fe-S) centers, to quinones in the photosynthetic chain and possibly in a chloroplast respiratory chain. The immediate electron acceptor for the enzyme in this species is believed to be plastoquinone. Couples the redox reaction to proton translocation, and thus conserves the redox energy in a proton gradient. The polypeptide is NAD(P)H-quinone oxidoreductase subunit H, chloroplastic (Lolium perenne (Perennial ryegrass)).